We begin with the raw amino-acid sequence, 92 residues long: Small ribosomal subunit protein uS19 (92 aa).

This sequence belongs to the universal ribosomal protein uS19 family.

Its function is as follows. Protein S19 forms a complex with S13 that binds strongly to the 16S ribosomal RNA. In Prochlorococcus marinus (strain MIT 9312), this protein is Small ribosomal subunit protein uS19.